The primary structure comprises 187 residues: Orotate phosphoribosyltransferase (187 aa).

5-phospho-alpha-D-ribose 1-diphosphate contacts are provided by residues arginine 98, lysine 99, lysine 102, histidine 104, and 128-136 (EDVTTTGGS). 2 residues coordinate orotate: threonine 132 and arginine 160.

It belongs to the purine/pyrimidine phosphoribosyltransferase family. PyrE subfamily. In terms of assembly, homodimer. Requires Mg(2+) as cofactor.

The enzyme catalyses orotidine 5'-phosphate + diphosphate = orotate + 5-phospho-alpha-D-ribose 1-diphosphate. Its pathway is pyrimidine metabolism; UMP biosynthesis via de novo pathway; UMP from orotate: step 1/2. Its function is as follows. Catalyzes the transfer of a ribosyl phosphate group from 5-phosphoribose 1-diphosphate to orotate, leading to the formation of orotidine monophosphate (OMP). The protein is Orotate phosphoribosyltransferase of Rhodopseudomonas palustris (strain TIE-1).